The sequence spans 628 residues: MGVADLIKKFESISKEEGDATVDTNSSSKPLKSNDETKELHQQESTAVPQEVDVNEEFENEPETINSSRTAEKPLETNLPKPETNEEDEEEGSMSENKIYSKGENADINVNDFQEYKEMENTGAEVLASSVEESDAIQEGVAEETEGIATPKQKENEKNDESEEESANNASEPAEEYSQSEEDADIEQSNGKETENAENASQQANDGSTSTTTSKNKKKKNKKKNKKKRNGNVNTNANVDDSTKTGENDDTTGDTTSSTTSAIQEVNDLEVVDDSCLGIDQQHNREHLKALTQDVKEETLENIAHEGRGDNTGDQNAVEKSDFEKSDTEGSRIGRDLPFEFGKRNLTEESDVWDHNAWDNVEWGEEQVQQAEEKIKEQFKHPVPEFDKKLYNENPARYWDIFYKNNKENFFKDRKWLQIEFPILYASTRKDAEPVTIFEIGCGAGNTFFPILKDNENENLRIIAADFAPRAVELVKNSEQFNPKYGHATVWDLANPDGNLPDGVEPHSVDIAVMIFVFSALAPNQWDQAMDNLHKILKPGGKIIFRDYGAYDLTQVRFKKNRILEENFYVRGDGTRVYFFSEEKLREIFTKKYFLENKIGTDRRLLVNRKRQLKMYRCWVQAVFDVPQ.

Residues 1–18 are compositionally biased toward basic and acidic residues; sequence MGVADLIKKFESISKEEG. Disordered stretches follow at residues 1 to 106, 124 to 269, and 302 to 331; these read MGVA…GENA, AEVL…VNDL, and NIAH…TEGS. The span at 22–31 shows a compositional bias: polar residues; it reads VDTNSSSKPL. A compositionally biased stretch (basic and acidic residues) spans 32 to 42; sequence KSNDETKELHQ. Over residues 53 to 62 the composition is skewed to acidic residues; sequence DVNEEFENEP. S93 carries the post-translational modification Phosphoserine. Residues 132–146 are compositionally biased toward acidic residues; sequence EESDAIQEGVAEETE. At T150 the chain carries Phosphothreonine. A compositionally biased stretch (acidic residues) spans 173 to 186; the sequence is PAEEYSQSEEDADI. Residues 196–207 show a composition bias toward polar residues; that stretch reads NAENASQQANDG. Positions 215-230 are enriched in basic residues; it reads KNKKKKNKKKNKKKRN. Positions 231–240 are enriched in polar residues; that stretch reads GNVNTNANVD. 2 positions are modified to phosphoserine: S321 and S326. A Phosphothreonine modification is found at T347. S-adenosyl-L-methionine contacts are provided by W399, Y403, G441, D466, D492, L493, and I515.

Belongs to the methyltransferase superfamily. METL family. As to quaternary structure, interacts with SES1.

It is found in the cytoplasm. It localises to the cytoskeleton. It catalyses the reaction cytidine(32) in tRNA(Thr) + S-adenosyl-L-methionine = N(3)-methylcytidine(32) in tRNA(Thr) + S-adenosyl-L-homocysteine + H(+). It carries out the reaction cytidine(32) in tRNA(Ser) + S-adenosyl-L-methionine = N(3)-methylcytidine(32) in tRNA(Ser) + S-adenosyl-L-homocysteine + H(+). Its function is as follows. S-adenosyl-L-methionine-dependent methyltransferase that mediates N(3)-methylcytidine modification of residue 32 of the tRNA anticodon loop of tRNA(Thr) and tRNA(Ser). N(3)-methylcytidine methylation of tRNA(Thr) requires the N6-threonylcarbamoylation of tRNA (t6A37) by the EKC/KEOPS complex as prerequisite. N(3)-methylcytidine methylation of tRNA(Ser) requires the formation of N(6)-dimethylallyladenosine(37) (i6A37) by MOD5 as prerequisite. Methylation of tRNA(Ser) is also stimulated by SES1. Binds F-actin and shows weak F-actin cross-linking activity. This is tRNA(Thr) (cytosine(32)-N(3))-methyltransferase (ABP140) from Saccharomyces cerevisiae (strain ATCC 204508 / S288c) (Baker's yeast).